The sequence spans 106 residues: Small ribosomal subunit protein uS10 (106 aa).

The protein belongs to the universal ribosomal protein uS10 family. As to quaternary structure, part of the 30S ribosomal subunit.

Involved in the binding of tRNA to the ribosomes. This is Small ribosomal subunit protein uS10 from Caldicellulosiruptor bescii (strain ATCC BAA-1888 / DSM 6725 / KCTC 15123 / Z-1320) (Anaerocellum thermophilum).